The primary structure comprises 244 residues: Phosphoadenosine 5'-phosphosulfate reductase (244 aa).

Cys-239 acts as the Nucleophile; cysteine thiosulfonate intermediate in catalysis.

The protein belongs to the PAPS reductase family. CysH subfamily.

Its subcellular location is the cytoplasm. The catalysed reaction is [thioredoxin]-disulfide + sulfite + adenosine 3',5'-bisphosphate + 2 H(+) = [thioredoxin]-dithiol + 3'-phosphoadenylyl sulfate. It participates in sulfur metabolism; hydrogen sulfide biosynthesis; sulfite from sulfate: step 3/3. Functionally, catalyzes the formation of sulfite from phosphoadenosine 5'-phosphosulfate (PAPS) using thioredoxin as an electron donor. The protein is Phosphoadenosine 5'-phosphosulfate reductase of Buchnera aphidicola subsp. Acyrthosiphon pisum (strain Tuc7).